The chain runs to 224 residues: Endoplasmic reticulum vesicle protein 25 (224 aa).

An N-terminal signal peptide occupies residues 1 to 25; it reads MIPPRSLGSTAALLLVLLFTTLASA. At 26–190 the chain is on the lumenal side; it reads IKFDLPSNAH…ADTNLSTNMR (165 aa). In terms of domain architecture, GOLD spans 38–131; sequence TKCIWNYALS…IPVVTIDLDV (94 aa). A helical membrane pass occupies residues 191-211; sequence VTNFAILTLIALIALGVWQVF. The Cytoplasmic segment spans residues 212–224; the sequence is HLRGFFKRKYLID.

This sequence belongs to the EMP24/GP25L family.

It localises to the endoplasmic reticulum membrane. The protein resides in the golgi apparatus membrane. In terms of biological role, constituent of COPII-coated endoplasmic reticulum-derived transport vesicles. Required for efficient transport of a subset of secretory proteins to the Golgi. Facilitates retrograde transport from the Golgi to the endoplasmic reticulum. The polypeptide is Endoplasmic reticulum vesicle protein 25 (ERV25) (Mycosarcoma maydis (Corn smut fungus)).